The chain runs to 1274 residues: Clustered mitochondria protein homolog (1274 aa).

The tract at residues 1 to 53 (MAQTNGELEHSKGMSSPAVRISQAQKSTKLTVDPESPEQVANGTHAEGEQPEE) is disordered. TPR repeat units lie at residues 293-326 (SPSFNSSFEALQEANNQKDLLTTFPFQNAIPNNP), 510-543 (DYGGVEGKDVVATHPDFVPVFEKLSKALRIKKHP), and 628-661 (AKEAAKKEQSETAEPKEEGAEEKSEEALDQERVD). Residues 342–586 (DITRSQENYL…RVTPLDVMWQ (245 aa)) form the Clu domain. 2 disordered regions span residues 631 to 655 (AAKKEQSETAEPKEEGAEEKSEEAL) and 893 to 925 (VSNGVNGAGHDDSNSNKKKKKKGGDSNSPARAA). 4 TPR repeats span residues 998 to 1031 (AKLYHQLSMLYYQTDEKEAAVELARKAVIVTERT), 1040 to 1073 (ILSYLNLSLFEHASGNTKTALVYIKHAMDLWKII), 1082 to 1115 (ITTMNNAAVMLQHLKQYSDSRKWFEASLVVCESL), and 1124 to 1157 (ATILFQLAQALALDQDSKGAVGKMRDAYNIFLQQ). The interval 1197-1274 (INMTPRTLGT…KLRGSKKSSA (78 aa)) is disordered. Positions 1200–1217 (TPRTLGTRVQPQVGQTAP) are enriched in polar residues.

This sequence belongs to the CLU family. In terms of assembly, may associate with the eukaryotic translation initiation factor 3 (eIF-3) complex.

The protein resides in the cytoplasm. Functionally, mRNA-binding protein involved in proper cytoplasmic distribution of mitochondria. The polypeptide is Clustered mitochondria protein homolog (Aspergillus terreus (strain NIH 2624 / FGSC A1156)).